Here is a 602-residue protein sequence, read N- to C-terminus: Bifunctional lycopene cyclase/phytoene synthase (602 aa).

Positions 1 to 241 are lycopene beta-cyclase; that stretch reads MYDYAFVHLK…IVGGMAAFDQ (241 aa). Transmembrane regions (helical) follow at residues 6–26, 30–50, 76–96, 118–138, 146–166, 168–188, and 230–250; these read FVHL…AYPI, IHLI…LPWD, FEEL…YILF, VVKV…WNAA, YLGL…TLAG, FILS…TFYL, and MLIV…YAFP. Residues 248–602 form a phytoene synthase region; sequence AFPTLFPKVN…STLLRALYEQ (355 aa).

This sequence in the N-terminal section; belongs to the lycopene beta-cyclase family. It in the C-terminal section; belongs to the phytoene/squalene synthase family.

It is found in the membrane. It catalyses the reaction all-trans-lycopene = gamma-carotene. The enzyme catalyses gamma-carotene = all-trans-beta-carotene. The catalysed reaction is 2 (2E,6E,10E)-geranylgeranyl diphosphate = 15-cis-phytoene + 2 diphosphate. Its pathway is carotenoid biosynthesis; beta-carotene biosynthesis. It functions in the pathway carotenoid biosynthesis; phytoene biosynthesis; all-trans-phytoene from geranylgeranyl diphosphate: step 1/1. Functionally, bifunctional enzyme that catalyzes the reactions from geranylgeranyl diphosphate to phytoene (phytoene synthase) and from lycopene to beta-carotene via the intermediate gamma-carotene and from 3,4-didehydrolycopene to torulene (lycopene cyclase). Torulene is further processed to the acidic carotenoid neurosporaxanthin. The cyclase preferentially catalyzes single cyclizations at only one end of the substrate to produce monocyclic carotenoids. Neurosporaxanthin is synthesized from geranyl-geranyl pyrophosphate (GGPP) through several enzymatic activities. Phytoene synthase activity performed by the bifunctional enzyme al-2 first produces phytoene from geranyl-geranyl pyrophosphate (GGPP). The phytoene dehydrogenase al-1 then introduces 5 desaturations to lead to 3,4-didehydrolycopene via the intermediates phytofluene, zeta-carotene, neurosporene and lycopene. Al-2 cyclase activity then converts 3,4-didehydrolycopene into torulene. Al-2 can also convet lycopene into gamma-carotene which in turn is converted to beta-carotene by an additional al-2 cyclization reaction. Torulene is the substrate of the dioxidase cao-2 that breaks the molecule, removing five carbon atoms to yield beta-apo-4'-carotenal, whereas the aldehyde dehydrogenase ylo-1 mediates the last step by converting beta-apo-4'-carotenal into neurosporaxanthin. This is Bifunctional lycopene cyclase/phytoene synthase from Neurospora crassa (strain ATCC 24698 / 74-OR23-1A / CBS 708.71 / DSM 1257 / FGSC 987).